A 349-amino-acid chain; its full sequence is Probable tRNA pseudouridine synthase B (349 aa).

Aspartate 41 serves as the catalytic Nucleophile. Positions 207–279 (YPKVIVKETA…KVIDIDNVLI (73 aa)) constitute a PUA domain. Residues 300–309 (IPVQKPERKL) are compositionally biased toward basic and acidic residues. Positions 300-349 (IPVQKPERKLHGNLQGSQEWKDTGNRGNPKRGGTGSKGFSSGFRKRKAKR) are disordered.

The protein belongs to the pseudouridine synthase TruB family. Type 2 subfamily.

The catalysed reaction is uridine(55) in tRNA = pseudouridine(55) in tRNA. Functionally, could be responsible for synthesis of pseudouridine from uracil-55 in the psi GC loop of transfer RNAs. The sequence is that of Probable tRNA pseudouridine synthase B from Picrophilus torridus (strain ATCC 700027 / DSM 9790 / JCM 10055 / NBRC 100828 / KAW 2/3).